Here is a 351-residue protein sequence, read N- to C-terminus: Pleckstrin (351 aa).

The PH 1 domain maps to 4–101 (KRIREGYLVK…WVRDTKKAIK (98 aa)). Lys-64 carries the post-translational modification N6-acetyllysine. Phosphoserine is present on residues Ser-113 and Ser-117. In terms of domain architecture, DEP spans 136–221 (IEKGIKELNL…NPDAFYYFPD (86 aa)). A PH 2 domain is found at 244-348 (VIIKQGCLLK…WIKAIQVASR (105 aa)).

Its function is as follows. Major protein kinase C substrate of platelets. This Canis lupus familiaris (Dog) protein is Pleckstrin (PLEK).